Here is a 373-residue protein sequence, read N- to C-terminus: DNA replication and repair protein RecF (373 aa).

30-37 contributes to the ATP binding site; that stretch reads GANGSGKT.

The protein belongs to the RecF family.

The protein localises to the cytoplasm. The RecF protein is involved in DNA metabolism; it is required for DNA replication and normal SOS inducibility. RecF binds preferentially to single-stranded, linear DNA. It also seems to bind ATP. The polypeptide is DNA replication and repair protein RecF (Marinobacter nauticus (strain ATCC 700491 / DSM 11845 / VT8) (Marinobacter aquaeolei)).